We begin with the raw amino-acid sequence, 971 residues long: Translation initiation factor IF-2 (971 aa).

The segment covering 49–63 (HLRKSHGATDGDKRK) has biased composition (basic and acidic residues). 2 disordered regions span residues 49-85 (HLRKSHGATDGDKRKITLTRKHTSEIKQSDATGKART) and 99-386 (RDDV…PTEP). A compositionally biased stretch (low complexity) spans 105-114 (GAEQGQAQVA). Basic and acidic residues predominate over residues 121–181 (ELKRREEEAR…EEEAAAKRAA (61 aa)). Low complexity predominate over residues 182–200 (AEAAAAQQAAAQQAAAEQE). Basic and acidic residues predominate over residues 209–260 (DEARAAAERAAQREAAKKAEDAAREAADKARAEQEEISKRRAAAEAEARAIR). Residues 303–325 (ARPAVKKPAGAAAPATTQAPAGA) show a composition bias toward low complexity. Residues 355-368 (SSGGVDRGWRGGPK) are compositionally biased toward gly residues. In terms of domain architecture, tr-type G spans 471–640 (PRPPVVTVMG…LLQAEVLELK (170 aa)). A G1 region spans residues 480-487 (GHVDHGKT). A GTP-binding site is contributed by 480–487 (GHVDHGKT). The tract at residues 505–509 (GITQH) is G2. The G3 stretch occupies residues 526 to 529 (DTPG). GTP contacts are provided by residues 526-530 (DTPGH) and 580-583 (NKID). A G4 region spans residues 580-583 (NKID). The G5 stretch occupies residues 616-618 (SAK).

This sequence belongs to the TRAFAC class translation factor GTPase superfamily. Classic translation factor GTPase family. IF-2 subfamily.

Its subcellular location is the cytoplasm. In terms of biological role, one of the essential components for the initiation of protein synthesis. Protects formylmethionyl-tRNA from spontaneous hydrolysis and promotes its binding to the 30S ribosomal subunits. Also involved in the hydrolysis of GTP during the formation of the 70S ribosomal complex. The protein is Translation initiation factor IF-2 of Burkholderia cenocepacia (strain ATCC BAA-245 / DSM 16553 / LMG 16656 / NCTC 13227 / J2315 / CF5610) (Burkholderia cepacia (strain J2315)).